A 137-amino-acid polypeptide reads, in one-letter code: CDGSH iron-sulfur domain-containing protein 3, mitochondrial (137 aa).

The residue at position 65 (Lys65) is an N6-acetyllysine; alternate. Lys65 carries the post-translational modification N6-succinyllysine; alternate. 4 residues coordinate [2Fe-2S] cluster: Cys70, Cys72, Cys81, and His85. Lys96 carries the post-translational modification N6-acetyllysine. Positions 108, 110, 119, and 123 each coordinate [2Fe-2S] cluster. At Lys124 the chain carries N6-acetyllysine; alternate. An N6-succinyllysine; alternate modification is found at Lys124.

Belongs to the CISD protein family. Monomer. Requires [2Fe-2S] cluster as cofactor.

It localises to the mitochondrion. Its function is as follows. Can transfer its iron-sulfur clusters to the apoferrodoxins FDX1 and FDX2. Contributes to mitochondrial iron homeostasis and in maintaining normal levels of free iron and reactive oxygen species, and thereby contributes to normal mitochondrial function. The sequence is that of CDGSH iron-sulfur domain-containing protein 3, mitochondrial (Cisd3) from Mus musculus (Mouse).